Consider the following 738-residue polypeptide: Propionyl-CoA carboxylase alpha chain, mitochondrial (738 aa).

In terms of domain architecture, Biotin carboxylation spans 62 to 509; that stretch reads KFDKILIANR…TTKYLPEVYP (448 aa). Residues K177, 209–270, E261, and N296 each bind ATP; that span reads SREI…PRHI. The 198-residue stretch at 181–378 folds into the ATP-grasp domain; sequence KKIATAARVS…IVQQMLRVAY (198 aa). 3 residues coordinate Mg(2+): E336, E349, and N351. Residues E336, E349, and N351 each contribute to the Mn(2+) site. The active site involves R353. F409 lines the biotin pocket. Positions 663–738 constitute a Biotinyl-binding domain; that stretch reads KAKVDLSTVV…DEGEVLVELE (76 aa). K704 bears the N6-biotinyllysine mark.

The holoenzyme is a dodecamer composed of 6 alpha subunits and 6 beta subunits. Interacts with sir-2.2. Biotin is required as a cofactor. Mg(2+) serves as cofactor. It depends on Mn(2+) as a cofactor. The biotin cofactor is covalently attached to the C-terminal biotinyl-binding domain and is required for the catalytic activity.

Its subcellular location is the mitochondrion matrix. It carries out the reaction propanoyl-CoA + hydrogencarbonate + ATP = (S)-methylmalonyl-CoA + ADP + phosphate + H(+). It catalyses the reaction butanoyl-CoA + hydrogencarbonate + ATP = (2S)-ethylmalonyl-CoA + ADP + phosphate + H(+). The protein operates within metabolic intermediate metabolism; propanoyl-CoA degradation; succinyl-CoA from propanoyl-CoA: step 1/3. Functionally, this is one of the 2 subunits of the biotin-dependent propionyl-CoA carboxylase (PCC), a mitochondrial enzyme involved in the catabolism of odd chain fatty acids, branched-chain amino acids isoleucine, threonine, methionine, and valine and other metabolites. Propionyl-CoA carboxylase catalyzes the carboxylation of propionyl-CoA/propanoyl-CoA to D-methylmalonyl-CoA/(S)-methylmalonyl-CoA. Within the holoenzyme, the alpha subunit catalyzes the ATP-dependent carboxylation of the biotin carried by the biotin carboxyl carrier (BCC) domain, while the beta subunit then transfers the carboxyl group from carboxylated biotin to propionyl-CoA. Propionyl-CoA carboxylase also significantly acts on butyryl-CoA/butanoyl-CoA, which is converted to ethylmalonyl-CoA/(2S)-ethylmalonyl-CoA. Other alternative minor substrates include (2E)-butenoyl-CoA/crotonoyl-CoA. The protein is Propionyl-CoA carboxylase alpha chain, mitochondrial (pcca-1) of Caenorhabditis briggsae.